An 800-amino-acid chain; its full sequence is Protein PET111, mitochondrial (800 aa).

To yeast YHR160C.

The protein resides in the mitochondrion matrix. Functionally, required for translation of the mitochondrial gene for cytochrome c oxidase subunit II (COX2). The sequence is that of Protein PET111, mitochondrial (PET111) from Saccharomyces cerevisiae (strain ATCC 204508 / S288c) (Baker's yeast).